We begin with the raw amino-acid sequence, 317 residues long: Electron transfer flavoprotein subunit alpha (317 aa).

This sequence belongs to the ETF alpha-subunit/FixB family. As to quaternary structure, heterodimer of an alpha and a beta subunit. The cofactor is FAD.

It localises to the cytoplasm. It functions in the pathway lipid metabolism; butanoate metabolism. In terms of biological role, part of an electron transfer flavoprotein involved in syntrophic growth of S.wolfei with butyrate. Probably receives electrons from butyryl-CoA dehydrogenases, and transfers them to the membrane-bound quinone oxidoreductase Swol_0698. The polypeptide is Electron transfer flavoprotein subunit alpha (Syntrophomonas wolfei subsp. wolfei (strain DSM 2245B / Goettingen)).